The primary structure comprises 154 residues: Immunity protein YwqK (154 aa).

As to quaternary structure, probably interacts with cognate toxin YwqJ but not with other non-cognate LXG toxins. The interaction inhibits the toxic activity of YwqJ.

The protein resides in the cytoplasm. Functionally, immunity component of one of 6 LXG toxin-immunity modules in this strain. They promote kin selection, mediate competition in biofilms, and drive spatial segregation of different strains, indicating that LXG toxins may help avoid warfare between strains in biofilms. Mediates intercellular competition during biofilm formation; disruption of the operon disadvantages the bacteria, but overexpression of the cognate immunity protein restores growth in competition with wild-type. In situ neutralizes the toxic effect of cognate toxin YqcG. Probably neutralizes the ability to inhibit growth of cognate toxin YwqJ. Probably does not have immunity protein activity on other LXG toxins. This Bacillus subtilis (strain 168) protein is Immunity protein YwqK (ywqK).